A 149-amino-acid polypeptide reads, in one-letter code: L-alanine exporter AlaE (149 aa).

4 helical membrane-spanning segments follow: residues 16 to 36 (FAMV…LSGM), 46 to 66 (LVAI…RDLF), 85 to 105 (ILAY…VVGA), and 112 to 132 (AAVS…GYFL).

The protein belongs to the AlaE exporter family.

Its subcellular location is the cell inner membrane. Its function is as follows. Exports L-alanine. The chain is L-alanine exporter AlaE from Shigella flexneri.